A 687-amino-acid chain; its full sequence is Glycine--tRNA ligase beta subunit (687 aa).

The protein belongs to the class-II aminoacyl-tRNA synthetase family. Tetramer of two alpha and two beta subunits.

The protein resides in the cytoplasm. It carries out the reaction tRNA(Gly) + glycine + ATP = glycyl-tRNA(Gly) + AMP + diphosphate. The chain is Glycine--tRNA ligase beta subunit from Ruegeria sp. (strain TM1040) (Silicibacter sp.).